Consider the following 488-residue polypeptide: Bifunctional pantoate ligase/cytidylate kinase (488 aa).

1 to 8 provides a ligand contact to ATP; the sequence is MGALHRAH. Residues 1–251 are pantoate--beta-alanine ligase; it reads MGALHRAHGQ…CGETRLIDHT (251 aa). His8 acts as the Proton donor in catalysis. Gln36 lines the (R)-pantoate pocket. A beta-alanine-binding site is contributed by Gln36. 125–128 lines the ATP pocket; it reads GEKD. Position 131 (Gln131) interacts with (R)-pantoate. Residues Val154 and 162–165 each bind ATP; that span reads CSSR. The segment at 252–488 is cytidylate kinase; the sequence is FLMSRQPIVA…PEEVWPTPGS (237 aa).

It in the N-terminal section; belongs to the pantothenate synthetase family. This sequence in the C-terminal section; belongs to the cytidylate kinase family. Type 1 subfamily.

It is found in the cytoplasm. It carries out the reaction (R)-pantoate + beta-alanine + ATP = (R)-pantothenate + AMP + diphosphate + H(+). The enzyme catalyses CMP + ATP = CDP + ADP. It catalyses the reaction dCMP + ATP = dCDP + ADP. Its pathway is cofactor biosynthesis; (R)-pantothenate biosynthesis; (R)-pantothenate from (R)-pantoate and beta-alanine: step 1/1. In terms of biological role, catalyzes the condensation of pantoate with beta-alanine in an ATP-dependent reaction via a pantoyl-adenylate intermediate. Catalyzes the transfer of a phosphate group from ATP to either CMP or dCMP to form CDP or dCDP and ADP, respectively. The protein is Bifunctional pantoate ligase/cytidylate kinase of Prochlorococcus marinus (strain MIT 9303).